Reading from the N-terminus, the 889-residue chain is Cytoplasmic aconitate hydratase (889 aa).

Residues Gln-86 and Asp-205–His-207 contribute to the substrate site. 3 residues coordinate [4Fe-4S] cluster: Cys-437, Cys-503, and Cys-506. Substrate is bound by residues Arg-536, Arg-541, Arg-699, and Ser-779–Arg-780.

The protein belongs to the aconitase/IPM isomerase family. In terms of assembly, interacts (when associated with the 4Fe-4S) with FBXL5. Interacts with frataxin(81-210). The cofactor is [4Fe-4S] cluster.

The protein localises to the cytoplasm. It localises to the cytosol. The enzyme catalyses citrate = D-threo-isocitrate. Functionally, bifunctional iron sensor that switches between 2 activities depending on iron availability. Iron deprivation, promotes its mRNA binding activity through which it regulates the expression of genes involved in iron uptake, sequestration and utilization. Binds to iron-responsive elements (IRES) in the untranslated region of target mRNAs preventing for instance the translation of ferritin and aminolevulinic acid synthase and stabilizing the transferrin receptor mRNA. Its function is as follows. Conversely, when cellular iron levels are high, binds a 4Fe-4S cluster which precludes RNA binding activity and promotes the aconitase activity, the isomerization of citrate to isocitrate via cis-aconitate. This chain is Cytoplasmic aconitate hydratase (ACO1), found in Bos taurus (Bovine).